The following is a 395-amino-acid chain: S-adenosylmethionine synthase (395 aa).

Residue His-18 coordinates ATP. Mg(2+) is bound at residue Asp-20. K(+) is bound at residue Glu-46. The L-methionine site is built by Glu-59 and Gln-103. A flexible loop region spans residues 103-113 (QSVDIAVGVDA). ATP is bound by residues 170 to 172 (DAK), 235 to 236 (KF), Asp-244, 250 to 251 (RK), Ala-267, and Lys-271. Asp-244 lines the L-methionine pocket. Lys-275 lines the L-methionine pocket.

Belongs to the AdoMet synthase family. In terms of assembly, homotetramer; dimer of dimers. Mg(2+) is required as a cofactor. It depends on K(+) as a cofactor.

The protein resides in the cytoplasm. It carries out the reaction L-methionine + ATP + H2O = S-adenosyl-L-methionine + phosphate + diphosphate. It functions in the pathway amino-acid biosynthesis; S-adenosyl-L-methionine biosynthesis; S-adenosyl-L-methionine from L-methionine: step 1/1. Catalyzes the formation of S-adenosylmethionine (AdoMet) from methionine and ATP. The overall synthetic reaction is composed of two sequential steps, AdoMet formation and the subsequent tripolyphosphate hydrolysis which occurs prior to release of AdoMet from the enzyme. This Acidiphilium cryptum (strain JF-5) protein is S-adenosylmethionine synthase.